Here is a 153-residue protein sequence, read N- to C-terminus: Probable inactive ribonuclease-like protein 13 (153 aa).

A signal peptide spans 1-22 (MASDAASLLVLQLVLQPTLVTG).

It belongs to the pancreatic ribonuclease family.

The protein resides in the secreted. Functionally, does not exhibit any ribonuclease activity. The sequence is that of Probable inactive ribonuclease-like protein 13 (Rnase13) from Rattus norvegicus (Rat).